Here is a 514-residue protein sequence, read N- to C-terminus: 2,3-bisphosphoglycerate-independent phosphoglycerate mutase (514 aa).

2 residues coordinate Mn(2+): Asp-13 and Ser-63. Ser-63 functions as the Phosphoserine intermediate in the catalytic mechanism. Substrate is bound by residues His-124, 154-155, Arg-186, Arg-192, 258-261, and Lys-332; these read RD and RADR. Asp-399, His-403, Asp-440, His-441, and His-459 together coordinate Mn(2+).

This sequence belongs to the BPG-independent phosphoglycerate mutase family. As to quaternary structure, monomer. The cofactor is Mn(2+).

It catalyses the reaction (2R)-2-phosphoglycerate = (2R)-3-phosphoglycerate. It participates in carbohydrate degradation; glycolysis; pyruvate from D-glyceraldehyde 3-phosphate: step 3/5. Catalyzes the interconversion of 2-phosphoglycerate and 3-phosphoglycerate. The sequence is that of 2,3-bisphosphoglycerate-independent phosphoglycerate mutase from Legionella pneumophila (strain Corby).